A 147-amino-acid chain; its full sequence is Hemoglobin subunit delta (147 aa).

The Globin domain occupies 3 to 147 (HLTPEEKTAV…VANALAHKYH (145 aa)). Ser-51 carries the phosphoserine modification. His-64 and His-93 together coordinate heme b.

The protein belongs to the globin family. As to quaternary structure, heterotetramer of two delta chains and two alpha chains. As to expression, red blood cells.

The polypeptide is Hemoglobin subunit delta (HBD) (Gorilla gorilla gorilla (Western lowland gorilla)).